The sequence spans 717 residues: Polyribonucleotide nucleotidyltransferase (717 aa).

Residues aspartate 488 and aspartate 494 each coordinate Mg(2+). The region spanning 555 to 614 is the KH domain; that stretch reads PRIEVMNIPVDKIREVIGSGGKVIREIVEKTGAKINIEDDGTVKIASSSGKEIEAARKWI. The region spanning 624 to 692 is the S1 motif domain; it reads GQIYEGTVVK…ERGKVRLSMK (69 aa).

The protein belongs to the polyribonucleotide nucleotidyltransferase family. The cofactor is Mg(2+).

The protein localises to the cytoplasm. It carries out the reaction RNA(n+1) + phosphate = RNA(n) + a ribonucleoside 5'-diphosphate. In terms of biological role, involved in mRNA degradation. Catalyzes the phosphorolysis of single-stranded polyribonucleotides processively in the 3'- to 5'-direction. This is Polyribonucleotide nucleotidyltransferase from Sinorhizobium fredii (strain NBRC 101917 / NGR234).